The following is a 218-amino-acid chain: MNSPDQIPFNTQLYTPPAQPITSTDYFSKKGNAPKLAVDVDLEPRTVPSFSHRHTEVTKYISPVDKLSPDVETPAEVGPANFIPNMSQYRFLLVDDNSINLKILTKILLRLYPRAHIVELCDSTSVLAYLASTPPFDCVFLDIEMPVVSGTELAYRIRQSPKLCRLPLIAVTTRTQEEDLAQYKDVGIDWTFGKPFNYPYRVVLDVVDNVLRQRINEL.

The Response regulatory domain maps to 90 to 209 (RFLLVDDNSI…YRVVLDVVDN (120 aa)). Position 142 is a 4-aspartylphosphate (Asp142).

Required for stress adaptation, morphogenesis and virulence. The sequence is that of Stress response regulator protein 1 (SRR1) from Meyerozyma guilliermondii (strain ATCC 6260 / CBS 566 / DSM 6381 / JCM 1539 / NBRC 10279 / NRRL Y-324) (Yeast).